A 175-amino-acid chain; its full sequence is Viral interleukin-10 homolog (175 aa).

An N-terminal signal peptide occupies residues 1 to 19 (MLSVMVSSSLVLIVFFLGA). Intrachain disulfides connect cysteine 37–cysteine 127 and cysteine 81–cysteine 132. Asparagine 151 is a glycosylation site (N-linked (GlcNAc...) asparagine; by host).

Belongs to the IL-10 family. In terms of assembly, homodimer; disulfide-linked.

It is found in the secreted. Functionally, functional viral IL-10 homolog. Can bind to the human IL-10 receptor and compete with human IL-10 for binding sites. Requires both subunits of the human IL-10 receptor complex to induce signal transduction events and biological activities. IL-10 signaling pathway has several immunosuppressive activities that are exploited by the virus. Inhibits TLR-induced type I interferon production in host plasmacytoid dendritic cells. The polypeptide is Viral interleukin-10 homolog (UL111A) (Human cytomegalovirus (strain AD169) (HHV-5)).